The primary structure comprises 165 residues: 2-C-methyl-D-erythritol 2,4-cyclodiphosphate synthase (165 aa).

Asp12 and His14 together coordinate a divalent metal cation. Residues 12–14 and 38–39 contribute to the 4-CDP-2-C-methyl-D-erythritol 2-phosphate site; these read DIH and HS. Position 46 (His46) interacts with a divalent metal cation. 4-CDP-2-C-methyl-D-erythritol 2-phosphate contacts are provided by residues 60-62, 136-139, and Arg146; these read DIG and TTNE.

The protein belongs to the IspF family. As to quaternary structure, homotrimer. It depends on a divalent metal cation as a cofactor.

It carries out the reaction 4-CDP-2-C-methyl-D-erythritol 2-phosphate = 2-C-methyl-D-erythritol 2,4-cyclic diphosphate + CMP. It functions in the pathway isoprenoid biosynthesis; isopentenyl diphosphate biosynthesis via DXP pathway; isopentenyl diphosphate from 1-deoxy-D-xylulose 5-phosphate: step 4/6. In terms of biological role, involved in the biosynthesis of isopentenyl diphosphate (IPP) and dimethylallyl diphosphate (DMAPP), two major building blocks of isoprenoid compounds. Catalyzes the conversion of 4-diphosphocytidyl-2-C-methyl-D-erythritol 2-phosphate (CDP-ME2P) to 2-C-methyl-D-erythritol 2,4-cyclodiphosphate (ME-CPP) with a corresponding release of cytidine 5-monophosphate (CMP). The polypeptide is 2-C-methyl-D-erythritol 2,4-cyclodiphosphate synthase (Nostoc sp. (strain PCC 7120 / SAG 25.82 / UTEX 2576)).